Consider the following 284-residue polypeptide: RNase adapter protein RapZ (284 aa).

8 to 15 (GRSGSGKS) lines the ATP pocket. 56 to 59 (DVRN) serves as a coordination point for GTP. Residues 266 to 284 (RSRGKNVQSRHRTLEKRKP) are RNA-binding.

Belongs to the RapZ-like family. RapZ subfamily. Homotrimer.

Its function is as follows. Modulates the synthesis of GlmS, by affecting the processing and stability of the regulatory small RNA GlmZ. When glucosamine-6-phosphate (GlcN6P) concentrations are high in the cell, RapZ binds GlmZ and targets it to cleavage by RNase E. Consequently, GlmZ is inactivated and unable to activate GlmS synthesis. Under low GlcN6P concentrations, RapZ is sequestered and inactivated by an other regulatory small RNA, GlmY, preventing GlmZ degradation and leading to synthesis of GlmS. The chain is RNase adapter protein RapZ from Shigella boydii serotype 18 (strain CDC 3083-94 / BS512).